The primary structure comprises 184 residues: MSGKQSEEFKRTEKMTRMEYLFPVRFAVGWMFLDGGLRKAVLKPAKLDPNSASFVGGKLVNFLPHAGPFKGLLLMTLENRSLDVTFLTVFSYIEIIAGLFIIIGLLTRLAALGALAMSVGFAPAYWLGSTCEDEWQIGALLTAGSVTLMLTAAGRVWGLDYFLYKKLGDRPIANVPILKWIKLW.

4 helical membrane-spanning segments follow: residues 21–38 (LFPV…GGLR), 86–106 (FLTV…IGLL), 109–129 (LAAL…WLGS), and 137–157 (IGAL…GRVW).

Heterodimer of a large and a small subunit in a 2:2 stoichiometry. TQO may associate with the terminal oxidase formed by doxBCE.

The protein resides in the cell membrane. It carries out the reaction 6-decylubiquinone + 2 thiosulfate = 6-decylubiquinol + tetrathionate. Its activity is regulated as follows. Inhibited by sulfite, metabisulfite and dithonite. TQO plays a role in sulfur oxidation and is proposed to couple sulfur oxidation to dioxygen reduction; caldariellaquinone or sulfolobus quinone seem to serve to transfer electrons to the electron transport chain terminal oxidase formed by DoxBCE. This Acidianus ambivalens (Desulfurolobus ambivalens) protein is Thiosulfate dehydrogenase [quinone] large subunit (doxD).